Reading from the N-terminus, the 240-residue chain is Ribonuclease 3 (240 aa).

Positions S4–G134 constitute an RNase III domain. Position 44 (E44) interacts with Mg(2+). D48 is an active-site residue. Positions 120 and 123 each coordinate Mg(2+). E123 is an active-site residue. The DRBM domain occupies D161–V229.

Belongs to the ribonuclease III family. In terms of assembly, homodimer. Mg(2+) is required as a cofactor.

It is found in the cytoplasm. The enzyme catalyses Endonucleolytic cleavage to 5'-phosphomonoester.. In terms of biological role, digests double-stranded RNA. Involved in the processing of primary rRNA transcript to yield the immediate precursors to the large and small rRNAs (23S and 16S). Processes some mRNAs, and tRNAs when they are encoded in the rRNA operon. Processes pre-crRNA and tracrRNA of type II CRISPR loci if present in the organism. This Mycobacterium bovis (strain ATCC BAA-935 / AF2122/97) protein is Ribonuclease 3.